An 80-amino-acid chain; its full sequence is MKPSSLLLFTTTILLCLSMAQPRATRKGVTPKQGYCPEFLLDCPFVLLPVCSRDKGCKGTKKCCFYYCQMRCVEPWTTLT.

A signal peptide spans 1 to 20 (MKPSSLLLFTTTILLCLSMA). In terms of domain architecture, WAP spans 29–76 (VTPKQGYCPEFLLDCPFVLLPVCSRDKGCKGTKKCCFYYCQMRCVEPW). 4 disulfide bridges follow: Cys-36-Cys-64, Cys-43-Cys-68, Cys-51-Cys-63, and Cys-57-Cys-72.

It localises to the secreted. In terms of biological role, antibacterial protein. The sequence is that of WAP four-disulfide core domain protein 15A from Mus musculus (Mouse).